A 955-amino-acid chain; its full sequence is METLLSALATLYANTDREQKLQANNYLEEFQKSPAAWQICFSILNQDDSSIEAKLFAAQTLRQKIVYDFHQLPKETHIEFRNSLLQLFLAAKDSPRPLLVSLAVCMAAIALHMTEWHNVIADVFQACSSKDPSGRCVLQFLSVLPEEASDPRKTSLSWEELCIRVDELLRDNGPAVLELLVQYVDAVRASGSPSSADLGLVLTSLISWLREIPLDKVMASPLIELAFRSLDDDLLLEDAVEFLCALFNETKDVDETTDAILMLYPRLLELQPKLIAACDDPETFRALGRLFAEAGEAWVVLIARMPNDFLPLVNCIAQVAANDTELEAIKFTFAFWWDLKQMVELDVYAEARQLFAPIYLELVRIIVRHLHYPRTEDLAINEQMASNEVLFEDRDAEDRFRSFRHEMGDVLKDCCVVAGVSSCLVQISSQLIKVLKIKESGLPYYWQDVEAPLFALRAIGRMVPANEDQVIGSLFQILPQLPENNKVRYAATLFLGRYTEWTAQHSEFLELQLNYISAGFEVANKEVQSAAAQALKHFCYDCREQLVGHLSQLHMFYLNAKTYLAPDPLMEVAQGLAHIVDIQPVANVYQSVHSFLAPSLQSILLAQVKLNPTQAELEALADNIDIVTIFLSLVHPPSPAGELHPIVRLFQDIWPILSRTLDTFSDVLICERISKLLKNFIYTFKEKAIVTLPVITEALIKGFEKTQYGCFLWVSGACVRQFGVPEMDEQTLSAVWSFVGKQCTNMFYYMSNKNPKEIPDVIDDFFRLMMDALLANPQMVLESQMLESLIQAAMMSLQLEQQEPLQTVLNFLQDLLAFALHTPPYSLIEPLPDSLLKSLADLLLKNSQELYIILFNGMVFTFPRDNISDASAVLIPLIRLVFAADPSLCIKYMSNVLDQLPAMTIGQEEREKFLANFSKHCTSSEMPRLRAHLQDWTAMYRRRVLTPRAKLISDD.

Positions 23 to 90 (ANNYLEEFQK…RNSLLQLFLA (68 aa)) constitute an Importin N-terminal domain.

This is an uncharacterized protein from Schizosaccharomyces pombe (strain 972 / ATCC 24843) (Fission yeast).